Consider the following 144-residue polypeptide: Hexon-interlacing protein (144 aa).

Residues 106-133 are a coiled coil; it reads LTVMLAKLETLTAQLEELSQKVEELADA.

The protein belongs to the adenoviridae hexon-interlacing protein family. In terms of assembly, homotrimer. Interacts with hexon protein; this interaction tethers the hexons together. Self-interacts with adjacent proteins. Interacts with kinesin light chain KLC1; this interaction leads to capsid disruption at the nuclear pore complex during virus entry into host cell.

The protein localises to the virion. It localises to the host nucleus. In terms of biological role, structural component of the virion that acts as a cement protein on the capsid exterior and forms triskelion structures consisting of three molecules that stabilize three hexon trimers at the center of each icosahedral facet and fixes the peripentonal hexons. Dispensable for assembly. During virus entry, recruits the anterograde motor kinesin-1 to the capsid docked at the nuclear pore complex thereby subjecting the docked capsid to a pulling force. The resulting tension leads to capsid disruption, dispersion of capsid fragments toward cell periphery and eventually viral DNA entry into the host nucleus. The polypeptide is Hexon-interlacing protein (Homo sapiens (Human)).